A 1682-amino-acid polypeptide reads, in one-letter code: Cilia- and flagella-associated protein 43 (1682 aa).

WD repeat units follow at residues 168 to 207, 262 to 305, 315 to 354, 358 to 397, 488 to 527, and 697 to 738; these read NPGM…QEHH, PKDD…VTVL, DGAP…YQVK, EFDG…PLDK, LSQS…SFQI, and SHQG…ANIA. Residues 767–790 are disordered; that stretch reads RESTNEQQEETTESQKHLNSDSSE. Coiled coils occupy residues 926–960 and 1171–1223; these read KERT…VEVQ and SEDE…HLKR.

Belongs to the CFAP43 family. In terms of tissue distribution, expressed in testis. Expressed in the lung, brain, oviduct and nasal cavity.

It localises to the cell projection. The protein resides in the cilium. It is found in the flagellum. The protein localises to the cytoplasm. Its subcellular location is the cytoskeleton. It localises to the flagellum axoneme. The protein resides in the cilium axoneme. Its function is as follows. Flagellar protein involved in sperm flagellum axoneme organization and function. Involved in the regulation of the beating frequency of motile cilia on the epithelial cells of the respiratory tract. The polypeptide is Cilia- and flagella-associated protein 43 (Mus musculus (Mouse)).